The following is a 150-amino-acid chain: Large ribosomal subunit protein bL9 (150 aa).

It belongs to the bacterial ribosomal protein bL9 family.

Binds to the 23S rRNA. This Corynebacterium jeikeium (strain K411) protein is Large ribosomal subunit protein bL9.